The chain runs to 341 residues: Probable membrane-associated kinase regulator 1 (341 aa).

5 disordered regions span residues 1–29, 67–122, 158–185, 206–230, and 288–310; these read MRRQ…FEFN, TLGS…SSRP, PKTN…KRMS, LSPK…NNIR, and RGGF…SVSS. Low complexity-rich tracts occupy residues 12-29, 67-108, and 167-180; these read PPQS…FEFN, TLGS…SFPL, and SSSS…APSS. Over residues 208–230 the composition is skewed to polar residues; it reads PKQSSNIKTESSSSLKDSGNNIR. The segment covering 297 to 310 has biased composition (low complexity); sequence SCSSSSSNNNSVSS.

As to quaternary structure, a C-terminus-derived peptide binds BRI1 in vitro.

The protein localises to the cell membrane. Functionally, may negatively regulate brassinosteroid signaling. This Arabidopsis thaliana (Mouse-ear cress) protein is Probable membrane-associated kinase regulator 1 (MAKR1).